We begin with the raw amino-acid sequence, 274 residues long: Centriolar and ciliogenesis-associated protein hyls-1 (274 aa).

Disordered stretches follow at residues 156–188 (RSSVDDEENIAESVSVGLSTETEQSELQKSSRP) and 255–274 (NNEDWKANHDKDWSPRPYID). Polar residues predominate over residues 171 to 183 (VGLSTETEQSELQ). Residues 257–274 (EDWKANHDKDWSPRPYID) show a composition bias toward basic and acidic residues.

It belongs to the HYLS1 family. Interacts with sas-4; leading to its localization into newly forming centrioles.

Its subcellular location is the cytoplasm. The protein resides in the cytoskeleton. It is found in the microtubule organizing center. The protein localises to the centrosome. It localises to the centriole. Its subcellular location is the cell projection. The protein resides in the cilium. Functionally, plays an important role in ciliogenesis. The polypeptide is Centriolar and ciliogenesis-associated protein hyls-1 (Caenorhabditis elegans).